The sequence spans 237 residues: UPF0173 metal-dependent hydrolase BruAb2_0628 (237 aa).

This sequence belongs to the UPF0173 family.

The chain is UPF0173 metal-dependent hydrolase BruAb2_0628 from Brucella abortus biovar 1 (strain 9-941).